The chain runs to 555 residues: Glucose-6-phosphate isomerase (555 aa).

Residues 169-170 (GS), 219-224 (SKTFTT), Q364, E368, H399, and K521 contribute to the D-glucose 6-phosphate site. The Proton donor role is filled by E368. Active-site residues include H399 and K521.

This sequence belongs to the GPI family. Homodimer.

The protein localises to the cytoplasm. It is found in the cytosol. It carries out the reaction alpha-D-glucose 6-phosphate = beta-D-fructose 6-phosphate. Its pathway is carbohydrate degradation; glycolysis; D-glyceraldehyde 3-phosphate and glycerone phosphate from D-glucose: step 2/4. In terms of biological role, in the cytoplasm, catalyzes the conversion of glucose-6-phosphate to fructose-6-phosphate, the second step in glycolysis, and the reverse reaction during gluconeogenesis. The sequence is that of Glucose-6-phosphate isomerase (PGI1) from Eremothecium gossypii (strain ATCC 10895 / CBS 109.51 / FGSC 9923 / NRRL Y-1056) (Yeast).